Consider the following 132-residue polypeptide: Small ribosomal subunit protein uS11 (132 aa).

This sequence belongs to the universal ribosomal protein uS11 family. In terms of assembly, part of the 30S ribosomal subunit. Interacts with proteins S7 and S18. Binds to IF-3.

Functionally, located on the platform of the 30S subunit, it bridges several disparate RNA helices of the 16S rRNA. Forms part of the Shine-Dalgarno cleft in the 70S ribosome. In Legionella pneumophila (strain Paris), this protein is Small ribosomal subunit protein uS11.